We begin with the raw amino-acid sequence, 70 residues long: Gas vesicle protein A (70 aa).

The protein belongs to the gas vesicle GvpA family. In terms of assembly, the gas vesicle shell is 2 nm thick and consists of a single layer of this protein. It forms helical ribs nearly perpendicular to the long axis of the vesicle.

Its subcellular location is the gas vesicle shell. Gas vesicles are hollow, gas filled proteinaceous nanostructures found in some microorganisms. During planktonic growth they allow positioning of the organism at a favorable depth for light or nutrient acquisition. GvpA forms the protein shell. This chain is Gas vesicle protein A, found in Ancylobacter aquaticus.